Reading from the N-terminus, the 207-residue chain is A disintegrin and metalloproteinase with thrombospondin motifs 5 (207 aa).

The 74-residue stretch at 1–74 folds into the Peptidase M12B domain; it reads HAAFTVAHEI…GHGNCLLDLP (74 aa). A Zn(2+)-binding site is contributed by His-8. The active site involves Glu-9. 2 residues coordinate Zn(2+): His-12 and His-18. Cystine bridges form between Cys-24-Cys-53, Cys-95-Cys-117, Cys-106-Cys-127, Cys-112-Cys-146, and Cys-140-Cys-151. Residues 83-164 enclose the Disintegrin domain; the sequence is ELPGQTYDAS…TKKKYYSTSS (82 aa). Asn-96 carries an N-linked (GlcNAc...) asparagine glycan. Residues 165–205 form the TSP type-1 domain; sequence HGNWGSWGSWGQCSRSCGGGVQFAYRHCNNPAPKNNGRYCT. C-linked (Man) tryptophan glycans are attached at residues Trp-168 and Trp-171. Ser-180 is a glycosylation site (O-linked (Fuc...) serine).

The cofactor is Zn(2+). Post-translationally, the precursor is cleaved by furin and PCSK7 outside of the cell. Glycosylated. Can be O-fucosylated by POFUT2 on a serine or a threonine residue found within the consensus sequence C1-X(2)-(S/T)-C2-G of the TSP type-1 repeat domains where C1 and C2 are the first and second cysteine residue of the repeat, respectively. Fucosylated repeats can then be further glycosylated by the addition of a beta-1,3-glucose residue by the glucosyltransferase, B3GALTL. Fucosylation mediates the efficient secretion of ADAMTS family members. Can also be C-glycosylated with one or two mannose molecules on tryptophan residues within the consensus sequence W-X-X-W of the TPRs, and N-glycosylated. These other glycosylations can also facilitate secretion.

The protein resides in the secreted. It localises to the extracellular space. It is found in the extracellular matrix. Its function is as follows. Metalloproteinase that plays an important role in connective tissue organization, development, inflammation and cell migration. Extracellular matrix (ECM) degrading enzyme that shows proteolytic activity toward the hyalectan group of chondroitin sulfate proteoglycans (CSPGs) including ACAN, VCAN, BCAN and NCAN. Cleavage within the hyalectans occurs at Glu-Xaa recognition motifs. Plays a role in embryonic development, including limb and cardiac morphogenesis, and skeletal muscle development through its VCAN remodeling properties. Cleaves VCAN in the pericellular matrix surrounding myoblasts, facilitating myoblast contact and fusion which is required for skeletal muscle development and regeneration. Participates in the development of brown adipose tissue and browning of white adipose tissue. Plays an important role for T-lymphocyte migration from draining lymph nodes following viral infection. The protein is A disintegrin and metalloproteinase with thrombospondin motifs 5 (ADAMTS5) of Bos taurus (Bovine).